The following is a 548-amino-acid chain: Leucine-rich repeat LGI family member 3 (548 aa).

The first 30 residues, 1–30 (MAGLRARRGPGRRLLVLSTLGFCLMLQVSA), serve as a signal peptide directing secretion. The LRRNT domain occupies 31–64 (KRPPKTPPCPPSCSCTRDTAFCVDSKSVPKNLPS). LRR repeat units follow at residues 89–110 (LLQF…AFIG), 113–134 (HLQY…TFRG), and 137–158 (SLTH…IFRP). In terms of domain architecture, LRRCT spans 170 to 220 (NALNCDCKVKWLVEWLAHTNTTVAPIYCASPPRFQEHKVQDLPLREFDCIT). The N-linked (GlcNAc...) asparagine glycan is linked to N189. EAR repeat units follow at residues 222–264 (DFVL…KWDY) and 268–310 (QLRD…HWDP). N-linked (GlcNAc...) asparagine glycosylation occurs at N311. 5 EAR repeats span residues 314–361 (RFTK…RWHQ), 363–406 (GFYS…QWSR), 410–453 (QFVA…RWEG), 455–497 (RFSE…QWDE), and 501–543 (KFVR…RHVV).

As to quaternary structure, interacts with STX1A. Brain.

It is found in the secreted. It localises to the cytoplasmic vesicle. Its subcellular location is the secretory vesicle. The protein localises to the synaptic vesicle. The protein resides in the synapse. It is found in the synaptosome. It localises to the cell projection. Its subcellular location is the axon. Functionally, may participate in the regulation of neuronal exocytosis. In Mus musculus (Mouse), this protein is Leucine-rich repeat LGI family member 3 (Lgi3).